The sequence spans 357 residues: Transcription factor HHO1 (357 aa).

2 disordered regions span residues 94–117 (TSIE…ETDI) and 171–198 (NNNI…RKNR). Residues 96-109 (IEEEVDDKDDDDEE) are compositionally biased toward acidic residues. Residues 171 to 182 (NNNIKSPVTTSD) show a composition bias toward polar residues. The HTH myb-type domain occupies 193-253 (GQRKNRRCWS…HLQKYRLHAR (61 aa)). A DNA-binding region (H-T-H motif) is located at residues 224-249 (PKQIRDIMKVDGLTNDEVKSHLQKYR).

Its subcellular location is the nucleus. Probable factor involved in nitrate and phosphate signaling in roots. Integrates nitrate and phosphate starvation responses and adaptation of root architecture, depending on nutrient availabilities. Acts downstream of the nitrate sensor and transporter NPF6.3/NRT1.1. Represses primary root development in response to phosphate deficiency conditions, only when nitrate is present. This chain is Transcription factor HHO1, found in Arabidopsis thaliana (Mouse-ear cress).